A 343-amino-acid polypeptide reads, in one-letter code: NAC domain-containing protein 4 (343 aa).

One can recognise an NAC domain in the interval 12-168; the sequence is LPPGFRFHPT…EWVLCRVFKK (157 aa). Residues 109 to 174 mediate DNA binding; the sequence is VGMKKTLVFY…VFKKSLVEVG (66 aa). Residues 304 to 333 form a disordered region; the sequence is GGERERLSASQDTGLTSDVNPEISSSSGQK. The segment covering 311–332 has biased composition (polar residues); sequence SASQDTGLTSDVNPEISSSSGQ.

Expressed in roots, tiller buds, stems, leaves, lamina joints and the young husks. Expressed in embryos, coleoptiles, radicles, leaf pulvinus, ligules, panicles, palea and lemma, anthers, and the internode of the peduncles. Expressed in young leaves, root meristems, florescence meristems and young spikelets.

It is found in the nucleus. Transcription factor involved in the regulation of tiller bud outgrowth, but does not seem to regulate tiller bud initiation. Possesses transactivation activity in yeast. Involved in the regulation of plant architecture and grain yield. Acts as a negative regulator of plant height and flowering time. Regulates directly key genes of the gibberellin (GA) pathway by binding to their promoters. Positively regulates leaf senescence in an age-dependent manner. Activates directly the expression of the chlorophyll degradation genes SGR and NYC3. Positively regulates the level of abscisic acid (ABA) by directly up-regulating the expression of the ABA biosynthetic genes NCED3 and ZEP, and down-regulating the ABA catabolic gene CYP707A5/ABA8OX1. Promotes salt-induced cell death accompanied by the loss of plasma membrane integrity, nuclear DNA fragmentation, and changes of caspase-like activity. Targets genes that encoded a reactive oxygen species (ROS) scavenger COX11 and a caspase-like protease AP37. Activates the potassium efflux channels GORK and SKOR. Acts as a positive regulator of drought and salt tolerance through ABA-mediated pathways. Acts as a negative regulator of root growth. Functions as an upstream integrator of auxin and cytokinin signals that affect CROWN ROOTLESS (CRL) and cyclin-dependent protein kinase (CDK) genes to regulate cell division during root development. Binds directly to the promoters of the auxin inactivation-related genes GH3.6 and GH3.8, the auxin signaling-related gene ARF25, and the cytokinin oxidase gene CKX4. Activates directly the expressions of the 1-aminocyclopropane-1-carboxylate oxidase genes ACO1 and ACO3, enhancing ethylene synthesis, and then retarding seedling establishment. The polypeptide is NAC domain-containing protein 4 (Oryza sativa subsp. japonica (Rice)).